The following is a 637-amino-acid chain: DEAD-box ATP-dependent RNA helicase 37 (637 aa).

2 disordered regions span residues Met1–Ala68 and Gly86–Thr141. Low complexity-rich tracts occupy residues Ala10–Asn28 and Gly46–Ala68. Positions Gly104–Trp116 are enriched in gly residues. Positions Asn174 to Arg202 match the Q motif motif. Positions Ile205–Leu389 constitute a Helicase ATP-binding domain. Ala218–Thr225 lines the ATP pocket. The DEAD box motif lies at Asp333–Asp336. Residues Tyr416–Ser567 form the Helicase C-terminal domain. A disordered region spans residues Ser570–Gly610. Residues Gly588–Arg597 are compositionally biased toward basic and acidic residues. The span at Gly598–Gly610 shows a compositional bias: gly residues.

The protein belongs to the DEAD box helicase family. DDX3/DED1 subfamily.

The catalysed reaction is ATP + H2O = ADP + phosphate + H(+). In Oryza sativa subsp. japonica (Rice), this protein is DEAD-box ATP-dependent RNA helicase 37 (PL10A).